The sequence spans 470 residues: Tryptophan synthase beta chain 1, chloroplastic (470 aa).

Polar residues predominate over residues 1 to 10 (MAASGTSATF). A disordered region spans residues 1–24 (MAASGTSATFRASVSSAPSSSSQL). The span at 12-22 (ASVSSAPSSSS) shows a compositional bias: low complexity. At K165 the chain carries N6-(pyridoxal phosphate)lysine.

It belongs to the TrpB family. In terms of assembly, tetramer of two alpha and two beta chains. The cofactor is pyridoxal 5'-phosphate.

The protein resides in the plastid. The protein localises to the chloroplast. The catalysed reaction is (1S,2R)-1-C-(indol-3-yl)glycerol 3-phosphate + L-serine = D-glyceraldehyde 3-phosphate + L-tryptophan + H2O. Its pathway is amino-acid biosynthesis; L-tryptophan biosynthesis; L-tryptophan from chorismate: step 5/5. The beta subunit is responsible for the synthesis of L-tryptophan from indole and L-serine. In Arabidopsis thaliana (Mouse-ear cress), this protein is Tryptophan synthase beta chain 1, chloroplastic (TSB1).